Here is a 209-residue protein sequence, read N- to C-terminus: NADH-ubiquinone oxidoreductase subunit 9 (209 aa).

It belongs to the complex I 30 kDa subunit family. Complex I is composed of about 30 different subunits.

The protein localises to the mitochondrion inner membrane. The catalysed reaction is a ubiquinone + NADH + 5 H(+)(in) = a ubiquinol + NAD(+) + 4 H(+)(out). Core subunit of the mitochondrial membrane respiratory chain NADH dehydrogenase (Complex I) that is believed to belong to the minimal assembly required for catalysis. Complex I functions in the transfer of electrons from NADH to the respiratory chain. The immediate electron acceptor for the enzyme is believed to be ubiquinone. The protein is NADH-ubiquinone oxidoreductase subunit 9 (nad9) of Dictyostelium citrinum (Slime mold).